The primary structure comprises 327 residues: MSAANTERLKDEGSKLQVVVAGATAGMIARFVIAPLDVVKIRLQLQTHSLSDPLSQRAELLRGGPVYKGTLSTMRHIARQEGITGLWKGNVPAELLYITYSAVQFATYRSAAQLLHRVAGEDRQLPAAAESFVAGAAAGVTSTTVTYPLDLLRTRFAAQGSGDDRVYQSLRRAVADIWRDEGYRGFFRGIGPAVGQTFPFMGIFFAAYESLRAPLADLKLPFWGGQLALASMTASTLAKTAVFPLDLVRRRIQVQGPTRSKYVHKNIPEYKGTFSTISTIARTEGFRGLYRGLTVSLIKSAPASAVTMWTYERVLRALITFQSGRQD.

3 Solcar repeats span residues 13 to 114, 126 to 214, and 222 to 317; these read GSKL…AAQL, PAAA…LRAP, and FWGG…VLRA. The next 6 membrane-spanning stretches (helical) occupy residues 16–36, 95–111, 132–152, 189–209, 223–245, and 292–309; these read LQVV…IAPL, LLYI…YRSA, FVAG…LDLL, GIGP…AAYE, WGGQ…VFPL, and GLTV…VTMW.

It belongs to the mitochondrial carrier (TC 2.A.29) family.

The protein localises to the mitochondrion inner membrane. Its function is as follows. Mitochondrial transporter that mediates uptake of thiamine pyrophosphate (ThPP) into mitochondria. The sequence is that of Mitochondrial thiamine pyrophosphate carrier 1 (TPC1) from Pyricularia oryzae (strain 70-15 / ATCC MYA-4617 / FGSC 8958) (Rice blast fungus).